The following is a 96-amino-acid chain: Co-chaperonin GroES (96 aa).

The protein belongs to the GroES chaperonin family. In terms of assembly, heptamer of 7 subunits arranged in a ring. Interacts with the chaperonin GroEL.

It is found in the cytoplasm. Together with the chaperonin GroEL, plays an essential role in assisting protein folding. The GroEL-GroES system forms a nano-cage that allows encapsulation of the non-native substrate proteins and provides a physical environment optimized to promote and accelerate protein folding. GroES binds to the apical surface of the GroEL ring, thereby capping the opening of the GroEL channel. This is Co-chaperonin GroES from Trichlorobacter lovleyi (strain ATCC BAA-1151 / DSM 17278 / SZ) (Geobacter lovleyi).